Consider the following 336-residue polypeptide: Adenosine deaminase (336 aa).

The Zn(2+) site is built by His15 and His17. 3 residues coordinate substrate: His17, Asp19, and Gly172. His199 is a binding site for Zn(2+). Glu202 (proton donor) is an active-site residue. Asp279 serves as a coordination point for Zn(2+).

The protein belongs to the metallo-dependent hydrolases superfamily. Adenosine and AMP deaminases family. Adenosine deaminase subfamily. It depends on Zn(2+) as a cofactor.

The catalysed reaction is adenosine + H2O + H(+) = inosine + NH4(+). The enzyme catalyses 2'-deoxyadenosine + H2O + H(+) = 2'-deoxyinosine + NH4(+). Catalyzes the hydrolytic deamination of adenosine and 2-deoxyadenosine. The polypeptide is Adenosine deaminase (Streptococcus thermophilus (strain ATCC BAA-250 / LMG 18311)).